The sequence spans 150 residues: UPF0336 protein SAV_4901 (150 aa).

Residues 8–126 (VGRSYPPTDP…GNDVVDVRGE (119 aa)) enclose the MaoC-like domain.

It belongs to the UPF0336 family.

This Streptomyces avermitilis (strain ATCC 31267 / DSM 46492 / JCM 5070 / NBRC 14893 / NCIMB 12804 / NRRL 8165 / MA-4680) protein is UPF0336 protein SAV_4901.